Reading from the N-terminus, the 182-residue chain is Large ribosomal subunit protein uL5c (182 aa).

Belongs to the universal ribosomal protein uL5 family. As to quaternary structure, part of the 50S ribosomal subunit; contacts the 5S rRNA.

The protein localises to the plastid. It localises to the chloroplast. Functionally, binds 5S rRNA, forms part of the central protuberance of the 50S subunit. The sequence is that of Large ribosomal subunit protein uL5c (rpl5) from Cyanidium caldarium (Red alga).